The sequence spans 677 residues: Probable potassium transport system protein Kup (677 aa).

Transmembrane regions (helical) follow at residues 13–33, 54–74, 98–118, 137–157, 171–191, 217–237, 249–269, 296–316, 345–365, 374–394, 402–422, and 429–449; these read GALI…LYTM, VSLV…IIAL, WLLL…TLTP, FIFP…LLIV, IFGP…LVNI, TGIF…ALYS, VSWI…GAWI, IFGV…LISG, MYIG…VWAF, AYGL…YQFI, ILAF…LIAS, and GGYA…IWFY.

It belongs to the HAK/KUP transporter (TC 2.A.72) family.

Its subcellular location is the cell membrane. The enzyme catalyses K(+)(in) + H(+)(in) = K(+)(out) + H(+)(out). Transport of potassium into the cell. Likely operates as a K(+):H(+) symporter. In Leuconostoc mesenteroides subsp. mesenteroides (strain ATCC 8293 / DSM 20343 / BCRC 11652 / CCM 1803 / JCM 6124 / NCDO 523 / NBRC 100496 / NCIMB 8023 / NCTC 12954 / NRRL B-1118 / 37Y), this protein is Probable potassium transport system protein Kup.